The primary structure comprises 624 residues: Chaperone protein HtpG (624 aa).

The tract at residues 1 to 336 (MKGQETRGFQ…SNDLPLNVSR (336 aa)) is a; substrate-binding. The tract at residues 337-552 (EILQDSTVTR…ADEMSTQMAK (216 aa)) is b. The tract at residues 553–624 (LFAAAGQSVP…IRRMNQLLVS (72 aa)) is c.

The protein belongs to the heat shock protein 90 family. As to quaternary structure, homodimer.

Its subcellular location is the cytoplasm. Molecular chaperone. Has ATPase activity. The polypeptide is Chaperone protein HtpG (Salmonella choleraesuis (strain SC-B67)).